Here is an 87-residue protein sequence, read N- to C-terminus: Small ribosomal subunit protein bS16 (87 aa).

This sequence belongs to the bacterial ribosomal protein bS16 family.

This is Small ribosomal subunit protein bS16 from Nitrosospira multiformis (strain ATCC 25196 / NCIMB 11849 / C 71).